We begin with the raw amino-acid sequence, 47 residues long: Large ribosomal subunit protein bL34 (47 aa).

This sequence belongs to the bacterial ribosomal protein bL34 family.

This is Large ribosomal subunit protein bL34 from Nocardia farcinica (strain IFM 10152).